The chain runs to 231 residues: 5'-methylthioadenosine/S-adenosylhomocysteine nucleosidase (231 aa).

Glu-12 functions as the Proton acceptor in the catalytic mechanism. Substrate is bound by residues Gly-78, Val-153, and Met-174–Glu-175. The active-site Proton donor is Asp-198.

It belongs to the PNP/UDP phosphorylase family. MtnN subfamily.

The enzyme catalyses S-adenosyl-L-homocysteine + H2O = S-(5-deoxy-D-ribos-5-yl)-L-homocysteine + adenine. It catalyses the reaction S-methyl-5'-thioadenosine + H2O = 5-(methylsulfanyl)-D-ribose + adenine. It carries out the reaction 5'-deoxyadenosine + H2O = 5-deoxy-D-ribose + adenine. Its pathway is amino-acid biosynthesis; L-methionine biosynthesis via salvage pathway; S-methyl-5-thio-alpha-D-ribose 1-phosphate from S-methyl-5'-thioadenosine (hydrolase route): step 1/2. Catalyzes the irreversible cleavage of the glycosidic bond in both 5'-methylthioadenosine (MTA) and S-adenosylhomocysteine (SAH/AdoHcy) to adenine and the corresponding thioribose, 5'-methylthioribose and S-ribosylhomocysteine, respectively. Also cleaves 5'-deoxyadenosine, a toxic by-product of radical S-adenosylmethionine (SAM) enzymes, into 5-deoxyribose and adenine. The protein is 5'-methylthioadenosine/S-adenosylhomocysteine nucleosidase of Vibrio campbellii (strain ATCC BAA-1116).